Consider the following 837-residue polypeptide: Outer membrane usher protein HifC (837 aa).

The N-terminal stretch at 1–26 (MKTKIFPLNKIAFACSLLLANPLAWA) is a signal peptide. A disulfide bridge links C813 with C833.

This sequence belongs to the fimbrial export usher family.

It localises to the cell outer membrane. Essential for piliation. The chain is Outer membrane usher protein HifC (hifC) from Haemophilus influenzae.